The chain runs to 384 residues: DNA replication and repair protein RecF (384 aa).

30–37 (GNNAQGKS) is an ATP binding site.

This sequence belongs to the RecF family.

Its subcellular location is the cytoplasm. Functionally, the RecF protein is involved in DNA metabolism; it is required for DNA replication and normal SOS inducibility. RecF binds preferentially to single-stranded, linear DNA. It also seems to bind ATP. This chain is DNA replication and repair protein RecF, found in Gloeothece citriformis (strain PCC 7424) (Cyanothece sp. (strain PCC 7424)).